We begin with the raw amino-acid sequence, 509 residues long: Hyaluronidase PH-20 (509 aa).

A signal peptide spans 1–35 (MGVLKFKHIFFRSFVKSSGVSQIVFTFLLIPCCLT). 2 cysteine pairs are disulfide-bonded: cysteine 60/cysteine 351 and cysteine 224/cysteine 238. Asparagine 82 carries N-linked (GlcNAc...) asparagine glycosylation. Glutamate 148 (proton donor) is an active-site residue. Asparagine 166, asparagine 235, asparagine 254, and asparagine 368 each carry an N-linked (GlcNAc...) asparagine glycan. Intrachain disulfides connect cysteine 376-cysteine 387, cysteine 381-cysteine 435, and cysteine 437-cysteine 464. N-linked (GlcNAc...) asparagine glycosylation is present at asparagine 393. Residue serine 490 is the site of GPI-anchor amidated serine attachment. The propeptide at 491 to 509 (ATMFIVSILFLIISSVASL) is removed in mature form.

Belongs to the glycosyl hydrolase 56 family. Post-translationally, N-glycosylated. As to expression, testis.

It localises to the cell membrane. It catalyses the reaction Random hydrolysis of (1-&gt;4)-linkages between N-acetyl-beta-D-glucosamine and D-glucuronate residues in hyaluronate.. Functionally, involved in sperm-egg adhesion. Upon fertilization sperm must first penetrate a layer of cumulus cells that surrounds the egg before reaching the zona pellucida. The cumulus cells are embedded in a matrix containing hyaluronic acid which is formed prior to ovulation. This protein aids in penetrating the layer of cumulus cells by digesting hyaluronic acid. The sequence is that of Hyaluronidase PH-20 (SPAM1) from Homo sapiens (Human).